The primary structure comprises 371 residues: Cysteine proteinase EP-B 1 (371 aa).

The first 28 residues, 1-28 (MGLLSKKLLVASMVAAVLAVAAVELCSA), serve as a signal peptide directing secretion. A propeptide spans 29–133 (IPMEDKDLES…FMYAALNVSD (105 aa)) (activation peptide). Asn-130 carries N-linked (GlcNAc...) asparagine glycosylation. Disulfide bonds link Cys-155-Cys-197, Cys-189-Cys-230, and Cys-291-Cys-343. Cys-158 is an active-site residue. Active-site residues include His-297 and Asn-318.

Belongs to the peptidase C1 family.

The protein is Cysteine proteinase EP-B 1 of Hordeum vulgare (Barley).